The sequence spans 302 residues: MAGRELSHLQQLEAESIQIIREVAAEFDNPVMLYSIGKDSSVMLHLARKAFYPGKIPFPLLHVDTGWKFKEMIAFRDAQAKKFGFELLTHINPEGLAQGINPFDHGSAKHTDIMKTQGLKQALNQYGFDAAFGGARRDEEKSRAKERVYSFRDRHHRWDPKNQRPELWRTYNGAVNKGESIRVFPLSNWTELDIWQYIYQENIELVPLYFAAKRQVVERGGQLIMADDERMKLAEGEQIKEEVVRFRTLGCYPLTAAMHSEADSLEKIIEEMLLTRSSERQGRLIDSDQSASMEQKKRQGYF.

Residues 280 to 302 (RQGRLIDSDQSASMEQKKRQGYF) form a disordered region.

Belongs to the PAPS reductase family. CysD subfamily. In terms of assembly, heterodimer composed of CysD, the smaller subunit, and CysN.

It carries out the reaction sulfate + ATP + H(+) = adenosine 5'-phosphosulfate + diphosphate. Its pathway is sulfur metabolism; hydrogen sulfide biosynthesis; sulfite from sulfate: step 1/3. With CysN forms the ATP sulfurylase (ATPS) that catalyzes the adenylation of sulfate producing adenosine 5'-phosphosulfate (APS) and diphosphate, the first enzymatic step in sulfur assimilation pathway. APS synthesis involves the formation of a high-energy phosphoric-sulfuric acid anhydride bond driven by GTP hydrolysis by CysN coupled to ATP hydrolysis by CysD. This Shewanella baltica (strain OS195) protein is Sulfate adenylyltransferase subunit 2.